Here is a 168-residue protein sequence, read N- to C-terminus: Regulatory protein RecX (168 aa).

The protein belongs to the RecX family.

It is found in the cytoplasm. Functionally, modulates RecA activity. The polypeptide is Regulatory protein RecX (Serratia proteamaculans (strain 568)).